A 208-amino-acid chain; its full sequence is Large ribosomal subunit protein uL3 (208 aa).

A disordered region spans residues 123-147; sequence RHGQSRGPMAHGSRYHRRPGSMGPV.

It belongs to the universal ribosomal protein uL3 family. As to quaternary structure, part of the 50S ribosomal subunit. Forms a cluster with proteins L14 and L19.

In terms of biological role, one of the primary rRNA binding proteins, it binds directly near the 3'-end of the 23S rRNA, where it nucleates assembly of the 50S subunit. The protein is Large ribosomal subunit protein uL3 of Streptococcus uberis (strain ATCC BAA-854 / 0140J).